The chain runs to 358 residues: MPEQGIEAQLRLQRGAFRLDAHLQLPANGISVLLGRSGSGKTTLLRAIAGLERAEGFLQVGGQLWQDATCFRPPHQRSLGYVRQASELLPHLDVRANLEFGYRRIPRARRRLGLDEVIALFGLEDLLDQRAEWLPNGPRQRVAIACALLTSPDLLLLDAPLICLDRHSRAQILPALEQLRGQLRIPLLYVTHSQDEVTRLADHLILLDKGKTFASGPPGRLLSDPRLPLNHPDEAAVVLIGQVEHHDPHYRLSTVRVPGGTLSVSLSRLPPGAETRVRIFARDVSLSLDPPHNSSILNILRVRIADLFHEQDSARVMVRLDLDSACILARITRLSADRLGLAPGLQVYAQIKSVALME.

Residues 1 to 234 (MPEQGIEAQL…PRLPLNHPDE (234 aa)) form the ABC transporter domain. Residue 35–42 (GRSGSGKT) coordinates ATP. The Mop domain maps to 293 to 358 (NSSILNILRV…AQIKSVALME (66 aa)).

It belongs to the ABC transporter superfamily. Molybdate importer (TC 3.A.1.8) family. The complex is composed of two ATP-binding proteins (ModC), two transmembrane proteins (ModB) and a solute-binding protein (ModA).

It localises to the cell inner membrane. The catalysed reaction is molybdate(out) + ATP + H2O = molybdate(in) + ADP + phosphate + H(+). Its function is as follows. Part of the ABC transporter complex ModABC involved in molybdenum import. Responsible for energy coupling to the transport system. The chain is Molybdenum import ATP-binding protein ModC 2 from Azotobacter vinelandii.